Consider the following 157-residue polypeptide: Ribosome maturation factor RimP (157 aa).

It belongs to the RimP family.

Its subcellular location is the cytoplasm. Required for maturation of 30S ribosomal subunits. This Bacillus licheniformis (strain ATCC 14580 / DSM 13 / JCM 2505 / CCUG 7422 / NBRC 12200 / NCIMB 9375 / NCTC 10341 / NRRL NRS-1264 / Gibson 46) protein is Ribosome maturation factor RimP.